Consider the following 167-residue polypeptide: Putative lipoprotein YteS (167 aa).

An N-terminal signal peptide occupies residues 1–20; it reads MTKRIRTALCVIVSVLFLAS. The N-palmitoyl cysteine moiety is linked to residue Cys21. Cys21 carries S-diacylglycerol cysteine lipidation.

It is found in the cell membrane. In terms of biological role, may play a role in the degradation of type I rhamnogalacturonan derived from plant cell walls. The sequence is that of Putative lipoprotein YteS (yteS) from Bacillus subtilis (strain 168).